We begin with the raw amino-acid sequence, 50 residues long: Cytochrome c-555 (50 aa).

Positions 7, 10, 11, and 25 each coordinate heme.

Binds 1 heme group per subunit.

The protein localises to the cell membrane. This chain is Cytochrome c-555, found in Schinkia azotoformans (Bacillus azotoformans).